We begin with the raw amino-acid sequence, 182 residues long: Adenine phosphoribosyltransferase (182 aa).

This sequence belongs to the purine/pyrimidine phosphoribosyltransferase family. As to quaternary structure, homodimer.

It localises to the cytoplasm. It catalyses the reaction AMP + diphosphate = 5-phospho-alpha-D-ribose 1-diphosphate + adenine. It functions in the pathway purine metabolism; AMP biosynthesis via salvage pathway; AMP from adenine: step 1/1. In terms of biological role, catalyzes a salvage reaction resulting in the formation of AMP, that is energically less costly than de novo synthesis. This chain is Adenine phosphoribosyltransferase, found in Pseudomonas fluorescens (strain Pf0-1).